The following is a 328-amino-acid chain: Cytochrome c biogenesis protein CcsA (328 aa).

8 helical membrane-spanning segments follow: residues 15 to 35, 37 to 57, 68 to 88, 97 to 117, 142 to 162, 236 to 256, 271 to 291, and 297 to 317; these read FLVL…PSVP, LQAL…ALLG, ISNL…AHLI, LVGV…ALTL, VMML…AFLF, IIGL…VWAN, WALI…TKGW, and AILA…VNLL.

It belongs to the CcmF/CycK/Ccl1/NrfE/CcsA family. In terms of assembly, may interact with ccs1.

The protein localises to the cellular thylakoid membrane. Functionally, required during biogenesis of c-type cytochromes (cytochrome c6 and cytochrome f) at the step of heme attachment. This chain is Cytochrome c biogenesis protein CcsA, found in Gloeothece citriformis (strain PCC 7424) (Cyanothece sp. (strain PCC 7424)).